Here is a 334-residue protein sequence, read N- to C-terminus: Glycerol-3-phosphate dehydrogenase [NAD(P)+] (334 aa).

Residues Trp-13, Arg-33, and Lys-106 each contribute to the NADPH site. Residues Lys-106, Gly-137, and Ser-139 each contribute to the sn-glycerol 3-phosphate site. Position 141 (Ala-141) interacts with NADPH. Positions 192, 245, 255, 256, and 257 each coordinate sn-glycerol 3-phosphate. Lys-192 (proton acceptor) is an active-site residue. Arg-256 contributes to the NADPH binding site. NADPH is bound by residues Val-280 and Glu-282.

The protein belongs to the NAD-dependent glycerol-3-phosphate dehydrogenase family.

It is found in the cytoplasm. The catalysed reaction is sn-glycerol 3-phosphate + NAD(+) = dihydroxyacetone phosphate + NADH + H(+). It catalyses the reaction sn-glycerol 3-phosphate + NADP(+) = dihydroxyacetone phosphate + NADPH + H(+). The protein operates within membrane lipid metabolism; glycerophospholipid metabolism. In terms of biological role, catalyzes the reduction of the glycolytic intermediate dihydroxyacetone phosphate (DHAP) to sn-glycerol 3-phosphate (G3P), the key precursor for phospholipid synthesis. This Chlamydia abortus (strain DSM 27085 / S26/3) (Chlamydophila abortus) protein is Glycerol-3-phosphate dehydrogenase [NAD(P)+].